The chain runs to 354 residues: Release factor glutamine methyltransferase (354 aa).

S-adenosyl-L-methionine contacts are provided by residues 174-178 (GSGSG), Asp197, and Asn241. 241 to 244 (NPPY) is a binding site for substrate.

The protein belongs to the protein N5-glutamine methyltransferase family. PrmC subfamily.

It catalyses the reaction L-glutaminyl-[peptide chain release factor] + S-adenosyl-L-methionine = N(5)-methyl-L-glutaminyl-[peptide chain release factor] + S-adenosyl-L-homocysteine + H(+). Functionally, methylates the class 1 translation termination release factors RF1/PrfA and RF2/PrfB on the glutamine residue of the universally conserved GGQ motif. The protein is Release factor glutamine methyltransferase of Fusobacterium nucleatum subsp. nucleatum (strain ATCC 25586 / DSM 15643 / BCRC 10681 / CIP 101130 / JCM 8532 / KCTC 2640 / LMG 13131 / VPI 4355).